A 557-amino-acid chain; its full sequence is Nucleolin 1 (557 aa).

Disordered stretches follow at residues 1–297 (MGKS…GGSK), 376–398 (GERG…GDGG), and 474–557 (LVVD…FGDE). Residues 49–63 (QKEKAVKKVPKKVES) are compositionally biased toward basic and acidic residues. Acidic residues-rich tracts occupy residues 64 to 74 (SDDSDSESEEE), 91 to 101 (ESSDDSSSDDE), and 124 to 135 (SSSDDDSSDEEV). The span at 174–184 (AKIAKPAAKDS) shows a compositional bias: low complexity. Residues 186–197 (SSDDDSDEDSED) show a composition bias toward acidic residues. Low complexity predominate over residues 203-217 (KKAAPAAAKAASSSD). A compositionally biased stretch (acidic residues) spans 218 to 229 (SSDEDSDEESED). The segment covering 230-247 (EKPAQKKADTKASKKSSS) has biased composition (basic and acidic residues). Acidic residues predominate over residues 249–263 (ESSESEEDESEDEEE). The span at 264 to 281 (TPKKKSSDVEMVDAEKSS) shows a compositional bias: basic and acidic residues. The RRM 1 domain occupies 297–374 (KTLFAANLSF…REIRLDIAQE (78 aa)). One can recognise an RRM 2 domain in the interval 401–481 (KKIFVKGFDA…FYLVVDEPRP (81 aa)). Gly residues predominate over residues 485–503 (SSGGGGFGRGNGRFGSGGG).

In terms of assembly, interacts with THAL in the nucleus. In terms of tissue distribution, expressed in roots, leaves, shoots and flowers.

The protein resides in the nucleus. It localises to the nucleolus. Functionally, involved in pre-rRNA processing and ribosome assembly. Is associated with intranucleolar chromatin and pre-ribosomal particles and plays a role in controlling activation and repression of a specific subset of rRNA genes located in distinctive nucleolar organizer regions. Binds specifically rDNA chromatin and may be required to maintain rDNA chromatin structure, but is probably not required for the overall histone methylation status of 45S rRNA genes. Involved in leaf polarity establishment by functioning cooperatively with AS1 to repress abaxial genes ARF3, ARF4, KAN1, KAN2, YAB1 and YAB5, and the knox homeobox genes KNAT1, KNAT2, KNAT6, and STM to promote adaxial development in leaf primordia at shoot apical meristems at high temperatures. The protein is Nucleolin 1 of Arabidopsis thaliana (Mouse-ear cress).